We begin with the raw amino-acid sequence, 364 residues long: MKLNKIYLQSFRNLQETMLMPAQHFNIFYGNNGQGKTNLLESIFIMATMKSFKTARSSDLVRWGAISSLLKGWVERDGVTREIAVFLDNQGKKIRVDQKAVTRIDDFFGHLNVVVFTPEEVNMVKGLPELRRKYLDRAVFSSDITYLSVYHAYSKILKNRNMLLKRGEKASFDIWTEKLVEQGKNIILSRLAYLDALRDLLKRFYREISGNEEAVDISYRPYHMDLADCRGDVADAFAEALAKTATEEERRGTTLAGPHRDDVEFILNGRPLKQFGSQGQQKSYVLALKMAETEYLQKKFHSQPIFLLDDLSSELDQERKKNLMEFLKKRDMQVFITTTSLQNINVDEIENYRTYRIEEGKVLH.

Position 30-37 (30-37) interacts with ATP; it reads GNNGQGKT.

It belongs to the RecF family.

The protein resides in the cytoplasm. In terms of biological role, the RecF protein is involved in DNA metabolism; it is required for DNA replication and normal SOS inducibility. RecF binds preferentially to single-stranded, linear DNA. It also seems to bind ATP. The protein is DNA replication and repair protein RecF of Geotalea daltonii (strain DSM 22248 / JCM 15807 / FRC-32) (Geobacter daltonii).